An 885-amino-acid chain; its full sequence is Phycobiliprotein ApcE (885 aa).

Cys-185 contributes to the (2R,3E)-phycocyanobilin binding site. 3 PBS-linker domains span residues 242–422 (DVQG…FRKV), 498–680 (KSIG…NSKK), and 694–871 (NSIQ…KQSS).

The protein belongs to the phycobilisome linker protein family. In terms of processing, contains one covalently linked bilin chromophore. This protein autochromophorylates (Potential).

The protein localises to the plastid. The protein resides in the chloroplast thylakoid membrane. This protein is postulated to act both as terminal energy acceptor and as a linker polypeptide that stabilizes the phycobilisome architecture. May have intrinsic bilin lyase activity. The chain is Phycobiliprotein ApcE (apcE) from Aglaothamnion neglectum (Red alga).